Reading from the N-terminus, the 181-residue chain is Cell division protein ZapC (181 aa).

This sequence belongs to the ZapC family. As to quaternary structure, interacts directly with FtsZ.

The protein localises to the cytoplasm. Functionally, contributes to the efficiency of the cell division process by stabilizing the polymeric form of the cell division protein FtsZ. Acts by promoting interactions between FtsZ protofilaments and suppressing the GTPase activity of FtsZ. In Shewanella woodyi (strain ATCC 51908 / MS32), this protein is Cell division protein ZapC.